A 570-amino-acid chain; its full sequence is Proline--tRNA ligase (570 aa).

The protein belongs to the class-II aminoacyl-tRNA synthetase family. ProS type 1 subfamily. In terms of assembly, homodimer.

It is found in the cytoplasm. The enzyme catalyses tRNA(Pro) + L-proline + ATP = L-prolyl-tRNA(Pro) + AMP + diphosphate. In terms of biological role, catalyzes the attachment of proline to tRNA(Pro) in a two-step reaction: proline is first activated by ATP to form Pro-AMP and then transferred to the acceptor end of tRNA(Pro). As ProRS can inadvertently accommodate and process non-cognate amino acids such as alanine and cysteine, to avoid such errors it has two additional distinct editing activities against alanine. One activity is designated as 'pretransfer' editing and involves the tRNA(Pro)-independent hydrolysis of activated Ala-AMP. The other activity is designated 'posttransfer' editing and involves deacylation of mischarged Ala-tRNA(Pro). The misacylated Cys-tRNA(Pro) is not edited by ProRS. The sequence is that of Proline--tRNA ligase from Clostridium botulinum (strain Eklund 17B / Type B).